The following is a 178-amino-acid chain: Gamma-crystallin S (178 aa).

An N-acetylserine modification is found at Ser2. Residues 2–5 (SKTG) form an N-terminal arm region. Beta/gamma crystallin 'Greek key' domains lie at 6 to 44 (GKISFYEDRNFQGRRYDCDCDCADFRSYLSRCNSIRVEG) and 45 to 87 (GTWA…RAVH). Positions 88–93 (LSSGGQ) are connecting peptide. 2 consecutive Beta/gamma crystallin 'Greek key' domains span residues 94 to 134 (AKIQ…KVVE) and 135 to 177 (GTWI…RRIV).

Belongs to the beta/gamma-crystallin family. Monomer.

Functionally, crystallins are the dominant structural components of the vertebrate eye lens. The chain is Gamma-crystallin S (Crygs) from Mus musculus (Mouse).